We begin with the raw amino-acid sequence, 435 residues long: Trigger factor (435 aa).

In terms of domain architecture, PPIase FKBP-type spans 162 to 247 (GDRVIIDFKG…VKNVAEATLP (86 aa)).

The protein belongs to the FKBP-type PPIase family. Tig subfamily.

Its subcellular location is the cytoplasm. It carries out the reaction [protein]-peptidylproline (omega=180) = [protein]-peptidylproline (omega=0). Functionally, involved in protein export. Acts as a chaperone by maintaining the newly synthesized protein in an open conformation. Functions as a peptidyl-prolyl cis-trans isomerase. The sequence is that of Trigger factor from Chromobacterium violaceum (strain ATCC 12472 / DSM 30191 / JCM 1249 / CCUG 213 / NBRC 12614 / NCIMB 9131 / NCTC 9757 / MK).